The primary structure comprises 518 residues: Serine/threonine-protein kinase UL13 (518 aa).

Positions 1 to 119 (MDESRRQRPA…QAALTAPPSS (119 aa)) are disordered. One can recognise a Protein kinase domain in the interval 151–518 (PGARSFGGSG…TNPCARHALS (368 aa)). Residues 157 to 165 (GGSGGYGDV) and Lys176 each bind ATP. Asp277 functions as the Proton acceptor in the catalytic mechanism.

Belongs to the protein kinase superfamily. Ser/Thr protein kinase family. Post-translationally, autophosphorylated.

The protein localises to the virion tegument. It localises to the host nucleus. The catalysed reaction is L-seryl-[protein] + ATP = O-phospho-L-seryl-[protein] + ADP + H(+). It carries out the reaction L-threonyl-[protein] + ATP = O-phospho-L-threonyl-[protein] + ADP + H(+). Functionally, multifunctional serine/threonine kinase that plays a role in several processes including egress of virus particles from the nucleus, modulation of the actin cytoskeleton and regulation of viral and cellular gene expression. Regulates the nuclear localization of viral envelopment factors UL34 and UL31, by phosphorylating the US3 kinase, indicating a role in nuclear egress. Disrupts host nuclear lamins, including LMNA and LMNB1. Phosphorylates the viral Fc receptor composed of glycoproteins E (gE) and I (gI). Phosphorylation of glycoprotein E (gE) by UL13 alters its subcellular localization, from the host early endosome to the plasma membrane. Participates in the transcriptional regulation of cellular and viral mRNAs mainly by phosphorylating the viral transcriptional regulator ICP22. Additional substrates have been identified, including UL41, UL49 or host EF1D. This chain is Serine/threonine-protein kinase UL13, found in Homo sapiens (Human).